The chain runs to 459 residues: Transcription factor mlcR (459 aa).

Residues 21–53 (CDRCHAQKLKCTGSNANLVRAQCQRCQQAGLRC) constitute a DNA-binding region (zn(2)-C6 fungal-type). 2 disordered regions span residues 64 to 84 (LHKE…PMTA) and 135 to 170 (DPES…DFEG). A compositionally biased stretch (low complexity) spans 69–78 (AAGTTRATET).

It localises to the nucleus. Functionally, transcription factor that regulates the gene cluster that mediates the biosynthesis of compactin, also known as mevastatin or ML-236B, and which acts as a potent competitive inhibitor of HMG-CoA reductase. Binds to the consensus-binding motif 5'-WCGG-N(6)-TCGG-3' of target genes. The chain is Transcription factor mlcR from Penicillium citrinum.